Reading from the N-terminus, the 296-residue chain is Elongation factor Ts (296 aa).

An involved in Mg(2+) ion dislocation from EF-Tu region spans residues 82 to 85 (TDFV).

It belongs to the EF-Ts family.

The protein localises to the cytoplasm. Associates with the EF-Tu.GDP complex and induces the exchange of GDP to GTP. It remains bound to the aminoacyl-tRNA.EF-Tu.GTP complex up to the GTP hydrolysis stage on the ribosome. The sequence is that of Elongation factor Ts from Coxiella burnetii (strain CbuG_Q212) (Coxiella burnetii (strain Q212)).